We begin with the raw amino-acid sequence, 520 residues long: General transcription factor 3C polypeptide 5 (520 aa).

An N-acetylalanine modification is found at alanine 2. The tract at residues 466 to 520 (LFSNTGKADRGKEQLMFESGEEEEEEEEEEEEEEEDFKPSDGSENEMETEILDYV) is disordered. Composition is skewed to acidic residues over residues 484–501 (SGEE…EEED) and 508–520 (SENE…LDYV).

It belongs to the TFIIIC subunit 5 family. Part of the TFIIIC subcomplex TFIIIC2, consisting of six subunits, GTF3C1, GTF3C2, GTF3C3, GTF3C4, GTF3C5 and GTF3C6. Interacts with BRF1, GTF3C6 and TBP.

It is found in the nucleus. In terms of biological role, involved in RNA polymerase III-mediated transcription. Integral, tightly associated component of the DNA-binding TFIIIC2 subcomplex that directly binds tRNA and virus-associated RNA promoters. In Mus musculus (Mouse), this protein is General transcription factor 3C polypeptide 5 (Gtf3c5).